We begin with the raw amino-acid sequence, 568 residues long: Sphingosine-1-phosphate lyase 1 (568 aa).

Residues 1–41 (MPSTDLLTLKAFEPYLEILEVYSTKAKNYVNGHCTKYEPWQ) are Lumenal-facing. A helical; Signal-anchor for type III membrane protein membrane pass occupies residues 42–62 (LIAWSVVWTLLIVWGYEFVFQ). At 63–568 (PESLWSRFKK…SQMNGSPKPH (506 aa)) the chain is on the cytoplasmic side. K353 bears the N6-(pyridoxal phosphate)lysine; alternate mark. Position 353 is an N6-acetyllysine; alternate (K353). A 3'-nitrotyrosine mark is found at Y356 and Y366. The residue at position 564 (S564) is a Phosphoserine.

Belongs to the group II decarboxylase family. Sphingosine-1-phosphate lyase subfamily. In terms of assembly, homodimer. The cofactor is pyridoxal 5'-phosphate.

It localises to the endoplasmic reticulum membrane. The catalysed reaction is sphinganine 1-phosphate = hexadecanal + phosphoethanolamine. The enzyme catalyses sphing-4-enine 1-phosphate = (2E)-hexadecenal + phosphoethanolamine. It functions in the pathway lipid metabolism; sphingolipid metabolism. Cleaves phosphorylated sphingoid bases (PSBs), such as sphingosine-1-phosphate, into fatty aldehydes and phosphoethanolamine. Elevates stress-induced ceramide production and apoptosis. Required for global lipid homeostasis in liver and cholesterol homeostasis in fibroblasts. Involved in the regulation of pro-inflammatory response and neutrophil trafficking. Modulates neuronal autophagy via phosphoethanolamine production which regulates accumulation of aggregate-prone proteins such as APP. Seems to play a role in establishing neuronal contact sites and axonal maintenance. The chain is Sphingosine-1-phosphate lyase 1 from Pongo abelii (Sumatran orangutan).